The sequence spans 235 residues: RAD9, HUS1, RAD1-interacting nuclear orphan protein 1 (235 aa).

Phosphoserine is present on serine 50. The short motif at serine 54–phenylalanine 60 is the RAD1-binding motif element. The interval serine 66–leucine 106 is disordered. The span at proline 69–threonine 87 shows a compositional bias: basic residues. Positions glutamate 96 to leucine 106 are enriched in low complexity. The D-box signature appears at arginine 123–phenylalanine 130. The disordered stretch occupies residues glutamine 156–aspartate 198. Positions valine 162 to glutamate 173 are enriched in basic and acidic residues. The KEN box motif lies at glutamine 171–serine 175.

As to quaternary structure, interacts (when phosphorylated by PLK1) with POLQ; promoting POLQ recruitment to DNA damage sites. Interacts with RAD1; interaction is direct and promotes association with the 9-1-1 (RAD9-RAD1-HUS1) complex. Interacts with RAD18. Interacts with TOPBP1. Interacts with UBE2N. Post-translationally, phosphorylated at Ser-50 by PLK1, promoting interaction with polymerase theta (POLQ). Ubiquitinated and degraded by the APC/C complex upon mitotic exit.

It localises to the nucleus. Its subcellular location is the chromosome. Functionally, involved in microhomology-mediated end-joining (MMEJ) DNA repair by promoting recruitment of polymerase theta (POLQ) to DNA damage sites during mitosis. MMEJ is an alternative non-homologous end-joining (NHEJ) machinery that takes place during mitosis to repair double-strand breaks in DNA that originate in S-phase. Accumulates in M-phase; following phosphorylation by PLK1, interacts with POLQ, enabling its recruitment to double-strand breaks for subsequent repair. Also involved in the DNA damage response (DDR) signaling in response to genotoxic stresses such as ionizing radiation (IR) during the S phase. Recruited to sites of DNA damage through interaction with the 9-1-1 cell-cycle checkpoint response complex and TOPBP1 in a ATR-dependent manner. Required for the progression of the G1 to S phase transition. Plays a role in the stimulation of CHEK1 phosphorylation. The chain is RAD9, HUS1, RAD1-interacting nuclear orphan protein 1 (Rhno1) from Rattus norvegicus (Rat).